An 867-amino-acid chain; its full sequence is MQAEAADWFSSMPFQKHVYYPLASGPEGPDVAVAAAAAGAASMACAPPSAASGPLPFFQFRPRLESVDWRRLSAIDVDKVAGAVDVLTLQENIMNITFCKLEDEKCPHCQSGVDPVLLKLIRLAQFTIEYLLHSQEFLTSQLHTLEERLRLSHCDGEQSKKLLTKQAGEIKTLKEECKRRKKMISTQQLMIEAKANYYQCHFCDKAFMNQAFLQSHIQRRHTEENSHFEYQKNAQIEKLRSEIVVLKEELQLTRSELEAAHHASAVRFSKEYEMQKTKEEDFLKLFDRWKEEEKEKLVDEMEKVKEMFMKEFKELTSKNSALEYQLSEIQKSNMQIKSNIGTLKDAHEFKEDRSPYPQDFHNVMQLLDSQESKWTARVQAIHQEHKKEKGRLLSHIEKLRTSMIDDLNASNVFYKKRIEELGQRLQEQNELIITQRQQIKDFTCNPLNSISEPKGNPLAWQAFESQPAAPAVPMNAPALHTLETKSSLPMVHEQAFSSHILEPIEELSEEEKGRENEQKLNNNKMHLRKALKSNSSLTKGLRTMVEQNLMEKLETLGINADIRGISSDQLHRVLKSVESERHKQEREIPNFHQIREFLEHQVSCKIEEKALLSSDQCSVSQMDTLSTGEVPKMIQLPSKNRQLIRQKAVSTDRTSVPKIKKNVMEDPFPRKSSTITTPPFSSEEEQEDDDLIRAYASPGPLPVPPPQNKGSFGKNTVKSDADGTEGSEIEDTDDSPKPAGVAVKTPTEKVEKMFPHRKNVNKPVGGTNVPEMFIKKEELQELKCADVEDEDWDISSLEEEISLGKKSGKEQKEPPPAKNEPHFAHVLNAWGAFNPKGPKGEGLQENESSTLKSSLVTVTDWSDTSDV.

The tract at residues 12-203 is mediates interaction with PCM1; the sequence is MPFQKHVYYP…KANYYQCHFC (192 aa). The mediates interaction with GLI3 and localization to the cilium basal body stretch occupies residues 12 to 367; that stretch reads MPFQKHVYYP…QDFHNVMQLL (356 aa). Positions 154–278 are required for interaction with DAZ1; it reads CDGEQSKKLL…SKEYEMQKTK (125 aa). The C2H2-type zinc-finger motif lies at 198 to 221; sequence YQCHFCDKAFMNQAFLQSHIQRRH. Serine 226 is modified (phosphoserine; by PLK1). Coiled-coil stretches lie at residues 230–340, 401–445, and 568–588; these read YQKN…KSNI, TSMI…FTCN, and DQLHRVLKSVESERHKQEREI. Residues 446-617 are mediates interaction with GDI2 and RAB8A; the sequence is PLNSISEPKG…EKALLSSDQC (172 aa). Composition is skewed to polar residues over residues 643–654, 671–680, and 708–718; these read LIRQKAVSTDRT, KSSTITTPPF, and NKGSFGKNTVK. Disordered regions lie at residues 643 to 768 and 796 to 867; these read LIRQ…GGTN and SLEE…TSDV. The segment covering 722–733 has biased composition (acidic residues); sequence DGTEGSEIEDTD. The segment covering 807–823 has biased composition (basic and acidic residues); it reads SGKEQKEPPPAKNEPHF. A compositionally biased stretch (low complexity) spans 848–859; the sequence is SSTLKSSLVTVT.

The protein belongs to the DZIP C2H2-type zinc-finger protein family. Interacts with DAZ1. Interacts with the BBSome; recruits the BBSome to centriolar satellites of the cilium. Interacts with PCM1; localizes DZIP1 and the associated BBSome to centriolar satellites. Interacts with RAB8A (GDP-bound inactive form); recruits RAB8A to the basal body of the cilium and prevents its inhibition by GDI2. Interacts with GDI2; negatively regulates the interaction of GDI2 with GDP-bound RAB8A. Interacts with GLI3; retains GLI3 within the cytoplasm. Interacts with CEP164. Interacts with IFT88. In terms of processing, phosphorylation at Ser-226 by PLK1 before mitosis prevents interaction with PCM1 and localization to centriolar satellites. Thereby, it negatively regulates the localization of the BBSome to centriolar satellites. In terms of tissue distribution, predominantly expressed in testis (at protein level). Also expressed in fetal brain, adult oocytes and ovary. Expressed in undifferentiated ES cells. In testis, it is specifically expressed in germ cells (at protein level). Expressed in mature germ cells and secondary spermatocytes, while it is weakly or not expressed in primary spermatocytes.

It is found in the cytoplasm. The protein localises to the cytoskeleton. Its subcellular location is the cilium basal body. The protein resides in the microtubule organizing center. It localises to the centrosome. It is found in the centriolar satellite. The protein localises to the centriole. Its subcellular location is the nucleus. The protein resides in the nucleus speckle. Its function is as follows. Molecular adapter that recruits protein complexes required for cilium assembly and function to the cilium basal body. At the exit of mitosis, localizes to the basal body and ciliary base of the forming primary cilium where it recruits and activates RAB8A to direct vesicle-mediated transport of proteins to the cilium. Also recruits the BBSome, a complex involved in cilium biogenesis, by bridging it to PCM1 at the centriolar satellites of the cilium. It is also required for the recruitment to the cilium basal body of the intraflagellar transport (IFT) machinery as well as the ciliary appendage proteins CEP164 and NINEIN. Functions as a regulator of Hedgehog signaling both through its role in cilium assembly but also probably through its ability to retain GLI3 within the cytoplasm. It is involved in spermatogenesis through its role in organization of the basal body and assembly of the sperm flagellum. Also indirectly involved in heart development through its function in ciliogenesis. The chain is Cilium assembly protein DZIP1 from Homo sapiens (Human).